Here is a 121-residue protein sequence, read N- to C-terminus: Trypsin/alpha-amylase inhibitor CMX2 (121 aa).

The N-terminal stretch at 1–24 is a signal peptide; that stretch reads MAFKHQLILSTAILLAVLAAASAS.

Belongs to the protease inhibitor I6 (cereal trypsin/alpha-amylase inhibitor) family.

Its subcellular location is the secreted. In Triticum aestivum (Wheat), this protein is Trypsin/alpha-amylase inhibitor CMX2.